The primary structure comprises 1648 residues: Histone transcription regulator 3 (1648 aa).

Disordered regions lie at residues 301–371 (NTPS…EQEN) and 1597–1630 (DVND…IKKR). At T302 the chain carries Phosphothreonine. S304 bears the Phosphoserine mark. Over residues 339–353 (EEARPNKRTDEHIDS) the composition is skewed to basic and acidic residues. Residues 1597–1610 (DVNDENNPALPSSG) are compositionally biased toward polar residues. Residues 1611-1625 (SVTSKSTPDPTSKPS) show a composition bias toward low complexity.

The protein belongs to the HIR3 family. As to quaternary structure, component of the HIR complex, composed of HIR1, HIR2, HIR3 and HPC2. This complex may consist of one copy of HIR1 and HIR3 and two copies of HIR2 and HPC2. The HIR complex interacts with ASF1. Interacts with RTT106.

The protein localises to the nucleus. Its subcellular location is the chromosome. Its function is as follows. HIR1, HIR2 and HIR3 are repressors of histone gene transcription. They are required for the periodic repression of three of the four histone gene loci during cell cycle as well as for autogenous regulation of the HTA1-HTB1 locus by H2A and H2B. Also has a role in nucleosome assembly. The protein is Histone transcription regulator 3 (HIR3) of Saccharomyces cerevisiae (strain ATCC 204508 / S288c) (Baker's yeast).